The chain runs to 349 residues: Glycosyltransferase 8 domain-containing protein 2 (349 aa).

Residues 1-6 (MALLRK) lie on the Cytoplasmic side of the membrane. Residues 7 to 24 (INQVLLFLLIVTLCVILY) traverse the membrane as a helical; Signal-anchor for type II membrane protein segment. At 25–349 (KKVHKGTVPK…AGIFKLNHHS (325 aa)) the chain is on the lumenal side. Asn-234 carries an N-linked (GlcNAc...) asparagine glycan.

This sequence belongs to the glycosyltransferase 8 family.

The protein resides in the membrane. The protein is Glycosyltransferase 8 domain-containing protein 2 (GLT8D2) of Homo sapiens (Human).